Reading from the N-terminus, the 361-residue chain is Peptide chain release factor 1 (361 aa).

N5-methylglutamine is present on Q235. Residues 283-306 (RSQQATAEAMTRKLQVGSGDRSQR) form a disordered region.

The protein belongs to the prokaryotic/mitochondrial release factor family. Post-translationally, methylated by PrmC. Methylation increases the termination efficiency of RF1.

Its subcellular location is the cytoplasm. In terms of biological role, peptide chain release factor 1 directs the termination of translation in response to the peptide chain termination codons UAG and UAA. The chain is Peptide chain release factor 1 from Xylella fastidiosa (strain M23).